Here is a 551-residue protein sequence, read N- to C-terminus: Alkaline nuclease (551 aa).

It belongs to the herpesviridae alkaline nuclease family. As to quaternary structure, interacts with major DNA-binding protein; this interaction increases the nuclease processivity of the alkaline exonuclease.

The protein localises to the host nucleus. Its subcellular location is the host cytoplasm. Its function is as follows. Plays a role in processing non linear or branched viral DNA intermediates in order to promote the production of mature packaged unit-length linear progeny viral DNA molecules. Exhibits endonuclease and exonuclease activities and accepts both double-stranded and single-stranded DNA as substrate. Exonuclease digestion of DNA is in the 5'-&gt; 3' direction and the products are 5'-monophosphate nucleosides. Additionally, forms a recombinase with the major DNA-binding protein, which displays strand exchange activity. The protein is Alkaline nuclease of Varicella-zoster virus (strain Oka vaccine) (HHV-3).